The primary structure comprises 446 residues: Putative F-box protein At1g32660 (446 aa).

2 stretches are compositionally biased toward basic and acidic residues: residues 1 to 12 (MKRKDDDQEDRS) and 43 to 57 (NKLE…NPSK). Residues 1 to 57 (MKRKDDDQEDRSCSSASKLDPIPLDLKMATVPTKSHMKKSHQNKLEEDEKEDTNPSK) form a disordered region. Residues 57–107 (KLELDSLPLDLKMAILTRIPAKSLMKLRCVSKMWSSIIRSRGFIDSYYAIS) enclose the F-box domain.

The polypeptide is Putative F-box protein At1g32660 (Arabidopsis thaliana (Mouse-ear cress)).